Here is an 82-residue protein sequence, read N- to C-terminus: MVTIRLARHGAKKRPFYQIVVADSRNAATGRFIEKVGFFNPTAQGQEEGLRLDLDRVNHWVGQGASLSDRVAKLVKDAQKAA.

This sequence belongs to the bacterial ribosomal protein bS16 family.

In Vibrio campbellii (strain ATCC BAA-1116), this protein is Small ribosomal subunit protein bS16.